The following is a 506-amino-acid chain: Sodium-coupled neutral amino acid symporter 2 (506 aa).

The segment at 1 to 23 is disordered; sequence MKKAEMGRFNISPDEDSSSYSSN. Over 1-76 the chain is Cytoplasmic; the sequence is MKKAEMGRFN…HPGTTSFGMS (76 aa). Residues 1-96 are regulates protein turnover upon amino acid deprivation; it reads MKKAEMGRFN…SGILGLSYAM (96 aa). Residues Ser12, Ser21, Ser22, and Ser55 each carry the phosphoserine modification. The helical transmembrane segment at 77-96 threads the bilayer; it reads VFNLSNAIVGSGILGLSYAM. Asn82 provides a ligand contact to Na(+). Over 97–102 the chain is Extracellular; sequence ANTGIA. The helical transmembrane segment at 103 to 123 threads the bilayer; that stretch reads LFIILLTFVSIFSLYSVHLLL. Residues 124-158 lie on the Cytoplasmic side of the membrane; it reads KTANEGGSLLYEQLGHKAFGMVGKLTASGSITMQN. A helical membrane pass occupies residues 159–177; it reads IGAMSSYLFIVKYELPLVI. The Extracellular segment spans residues 178 to 188; sequence QALMNIEDTNG. A helical membrane pass occupies residues 189 to 209; the sequence is LWYLNGDYLVLLVSLVLILPL. Residues 210-217 lie on the Cytoplasmic side of the membrane; the sequence is SLLRNLGY. Residues 218 to 238 form a helical membrane-spanning segment; sequence LGYTSGLSLLCMMFFLIVVIF. Residues 239 to 292 lie on the Extracellular side of the membrane; it reads KKFQISCPAEIAFLVNETVNSSLTQPATFLPDMGFNRTESDSCQPRYFIFNSQT. Cys245 and Cys281 are oxidised to a cystine. N-linked (GlcNAc...) asparagine glycosylation is found at Asn258 and Asn274. A helical transmembrane segment spans residues 293 to 313; the sequence is VYAVPILTFSFVCHPAILPIY. The Cytoplasmic segment spans residues 314–329; the sequence is EELKGRSRRRMMNVSK. The helical transmembrane segment at 330-350 threads the bilayer; it reads ISFFAMFLMYLLAALFGYLTF. Residues 351-371 are Extracellular-facing; it reads YGHVESELLHTYSSVMETDIL. A helical transmembrane segment spans residues 372 to 392; it reads LLIVRLAVLVAVTLTVPVVIF. Thr386 contacts Na(+). Topologically, residues 393 to 413 are cytoplasmic; sequence PIRSSITHLLCASKEFSWWRH. The helical transmembrane segment at 414 to 434 threads the bilayer; that stretch reads SVITVSILVFTNLLVIFVPNI. At 435-436 the chain is on the extracellular side; that stretch reads RD. The chain crosses the membrane as a helical span at residues 437 to 457; the sequence is IFGFIGASAAAMLIFILPSAF. Over 458 to 472 the chain is Cytoplasmic; that stretch reads YIKLVKKEPMKSVQK. Residues 473 to 495 traverse the membrane as a helical segment; the sequence is IGAMFFLLSGIVVMTGSMALIVL. Residues 496-506 lie on the Extracellular side of the membrane; sequence DWVHNAPGGGH.

Belongs to the amino acid/polyamine transporter 2 family. Polyubiquitination by NEDD4L regulates the degradation and the activity of SLC38A2.

The protein localises to the cell membrane. The enzyme catalyses L-alanine(in) + Na(+)(in) = L-alanine(out) + Na(+)(out). The catalysed reaction is glycine(in) + Na(+)(in) = glycine(out) + Na(+)(out). It carries out the reaction L-serine(in) + Na(+)(in) = L-serine(out) + Na(+)(out). It catalyses the reaction L-proline(in) + Na(+)(in) = L-proline(out) + Na(+)(out). The enzyme catalyses L-methionine(in) + Na(+)(in) = L-methionine(out) + Na(+)(out). The catalysed reaction is L-histidine(in) + Na(+)(in) = L-histidine(out) + Na(+)(out). It carries out the reaction L-asparagine(in) + Na(+)(in) = L-asparagine(out) + Na(+)(out). It catalyses the reaction L-glutamine(in) + Na(+)(in) = L-glutamine(out) + Na(+)(out). The enzyme catalyses L-threonine(in) + Na(+)(in) = L-threonine(out) + Na(+)(out). The catalysed reaction is L-leucine(in) + Na(+)(in) = L-leucine(out) + Na(+)(out). It carries out the reaction L-phenylalanine(in) + Na(+)(in) = L-phenylalanine(out) + Na(+)(out). With respect to regulation, inhibited by N-methyl-D-glucamine. Inhibited by choline. Allosteric regulation of sodium ions binding by pH. In terms of biological role, symporter that cotransports neutral amino acids and sodium ions from the extracellular to the intracellular side of the cell membrane. The transport is pH-sensitive, Li(+)-intolerant, electrogenic, driven by the Na(+) electrochemical gradient and cotransports of neutral amino acids and sodium ions with a stoichiometry of 1:1. May function in the transport of amino acids at the blood-brain barrier. May function in the transport of amino acids in the supply of maternal nutrients to the fetus through the placenta. Maintains a key metabolic glutamine/glutamate balance underpinning retrograde signaling by dendritic release of the neurotransmitter glutamate. Transports L-proline in differentiating osteoblasts for the efficient synthesis of proline-enriched proteins and provides proline essential for osteoblast differentiation and bone formation during bone development. The polypeptide is Sodium-coupled neutral amino acid symporter 2 (Bos taurus (Bovine)).